Consider the following 490-residue polypeptide: GTPase Der (490 aa).

EngA-type G domains follow at residues 3–166 (PVVA…VDEI) and 203–376 (IKLA…DSST). Residues 9–16 (GRPNVGKS), 56–60 (DTGGI), 118–121 (NKTD), 209–216 (GRPNVGKS), 256–260 (DTAGV), and 321–324 (NKWD) contribute to the GTP site. A KH-like domain is found at 377 to 461 (RRQSTAMLTR…PIRIQFKEGE (85 aa)).

The protein belongs to the TRAFAC class TrmE-Era-EngA-EngB-Septin-like GTPase superfamily. EngA (Der) GTPase family. In terms of assembly, associates with the 50S ribosomal subunit.

In terms of biological role, GTPase that plays an essential role in the late steps of ribosome biogenesis. The sequence is that of GTPase Der from Enterobacter sp. (strain 638).